We begin with the raw amino-acid sequence, 607 residues long: Karyogamy meiotic segregation protein 1 (607 aa).

A disordered region spans residues 83-135 (DDSFANQAEKPSMEQQNSKNSIKEDANEHSVNSAHSKSSSNASPESLNPSQMM). Low complexity predominate over residues 111–132 (HSVNSAHSKSSSNASPESLNPS).

In terms of assembly, interacts with mcp1 and sad1.

The protein resides in the cytoplasm. Its subcellular location is the cytoskeleton. It localises to the microtubule organizing center. It is found in the spindle pole body. In terms of biological role, has a role in karyogamy, recombination and segregation during meiosis. Although it has been shown to associate with the spindle pole body it is unlikely to be involved in its formation or maintenance. The protein is Karyogamy meiotic segregation protein 1 (kms1) of Schizosaccharomyces pombe (strain 972 / ATCC 24843) (Fission yeast).